A 401-amino-acid chain; its full sequence is Chorismate synthase (401 aa).

The NADP(+) site is built by R40 and R46. Residues 135–137, 256–257, G302, 317–321, and R343 contribute to the FMN site; these read RAS, QA, and KPISS.

It belongs to the chorismate synthase family. As to quaternary structure, homotetramer. The cofactor is FMNH2.

It catalyses the reaction 5-O-(1-carboxyvinyl)-3-phosphoshikimate = chorismate + phosphate. The protein operates within metabolic intermediate biosynthesis; chorismate biosynthesis; chorismate from D-erythrose 4-phosphate and phosphoenolpyruvate: step 7/7. In terms of biological role, catalyzes the anti-1,4-elimination of the C-3 phosphate and the C-6 proR hydrogen from 5-enolpyruvylshikimate-3-phosphate (EPSP) to yield chorismate, which is the branch point compound that serves as the starting substrate for the three terminal pathways of aromatic amino acid biosynthesis. This reaction introduces a second double bond into the aromatic ring system. This is Chorismate synthase from Saccharopolyspora erythraea (strain ATCC 11635 / DSM 40517 / JCM 4748 / NBRC 13426 / NCIMB 8594 / NRRL 2338).